Consider the following 334-residue polypeptide: Mucin-15 (334 aa).

Residues 1 to 23 (MLALAKILLISTLFYSLLSGSHG) form the signal peptide. At 24–236 (KENQDINTTQ…SDPQKENRNT (213 aa)) the chain is on the extracellular side. N-linked (GlcNAc...) asparagine glycans are attached at residues N30, N61, N79, N90, N148, N155, N163, N218, and N225. Residues 64–104 (TSNLKASHSPPLNLPNNSHGITDFSSNSSAEHSLGSLKPTS) form a disordered region. Polar residues predominate over residues 77-94 (LPNNSHGITDFSSNSSAE). The chain crosses the membrane as a helical span at residues 237–257 (GIVFGAILGAILGVSLLTLVG). At 258–334 (YLLCGKRKTD…DDIPPLRTSV (77 aa)) the chain is on the cytoplasmic side. The tract at residues 304 to 334 (PTLNDSAMPESEENARDGIPMDDIPPLRTSV) is disordered.

Highly glycosylated (N- and O-linked carbohydrates). Expressed in spleen, thymus, prostate, testis, ovary, small intestine, colon, peripheral blood leukocyte, bone marrow, lymph node and lung.

Its subcellular location is the cell membrane. The protein resides in the secreted. Its function is as follows. May play a role in the cell adhesion to the extracellular matrix. The protein is Mucin-15 (MUC15) of Homo sapiens (Human).